A 196-amino-acid polypeptide reads, in one-letter code: MADS-box protein FLOWERING LOCUS C (196 aa).

An MADS-box domain is found at 1 to 61; the sequence is MGRKKLEIKR…GKLYSFSSGD (61 aa). A Nuclear localization signal motif is present at residues 8-15; the sequence is IKRIENKS. The K-box domain maps to 80–170; that stretch reads ALDHQSKALN…ASQMENNHHV (91 aa).

High expression in the vegetative apex and in root tissue and lower expression in leaves and stems. Not detected in young tissues of the inflorescence. Before fertilization, expressed in ovules, but not in pollen or stamens, of non-vernalized plants. After vernalization, not detected in ovules.

The protein resides in the nucleus. Its function is as follows. Putative transcription factor that seems to play a central role in the regulation of flowering time in the late-flowering phenotype by interacting with 'FRIGIDA', the autonomous and the vernalization flowering pathways. Inhibits flowering by repressing 'SUPPRESSOR OF OVEREXPRESSION OF CONSTANS 1'. At elevated temperatures (e.g. 29 degrees Celsius), maintained at high levels in a JMJ30/JMJ32-dependent manner to prevent extreme precocious flowering. The chain is MADS-box protein FLOWERING LOCUS C from Arabidopsis thaliana (Mouse-ear cress).